Consider the following 1114-residue polypeptide: Mediator of RNA polymerase II transcription subunit 14 (1114 aa).

Disordered regions lie at residues 1-27, 40-79, and 120-141; these read MPGV…QDGL, ANAQ…GPPE, and HGIH…SPGN. Residues 126-140 are compositionally biased toward polar residues; sequence TAPTTGKSPGNQSPG.

The protein belongs to the Mediator complex subunit 14 family. In terms of assembly, component of the Mediator complex.

It localises to the nucleus. In terms of biological role, component of the Mediator complex, a coactivator involved in the regulated transcription of nearly all RNA polymerase II-dependent genes. Mediator functions as a bridge to convey information from gene-specific regulatory proteins to the basal RNA polymerase II transcription machinery. Mediator is recruited to promoters by direct interactions with regulatory proteins and serves as a scaffold for the assembly of a functional preinitiation complex with RNA polymerase II and the general transcription factors. The polypeptide is Mediator of RNA polymerase II transcription subunit 14 (rgr1) (Aspergillus niger (strain ATCC MYA-4892 / CBS 513.88 / FGSC A1513)).